Consider the following 510-residue polypeptide: Histidine ammonia-lyase (510 aa).

The 5-imidazolinone (Ala-Gly) cross-link spans 143–145 (ASG). Ser144 is modified (2,3-didehydroalanine (Ser)).

This sequence belongs to the PAL/histidase family. In terms of processing, contains an active site 4-methylidene-imidazol-5-one (MIO), which is formed autocatalytically by cyclization and dehydration of residues Ala-Ser-Gly.

The protein resides in the cytoplasm. The enzyme catalyses L-histidine = trans-urocanate + NH4(+). It participates in amino-acid degradation; L-histidine degradation into L-glutamate; N-formimidoyl-L-glutamate from L-histidine: step 1/3. The chain is Histidine ammonia-lyase from Psychromonas ingrahamii (strain DSM 17664 / CCUG 51855 / 37).